A 160-amino-acid chain; its full sequence is SsrA-binding protein (160 aa).

A disordered region spans residues 133–160 (KKLHDKRETEKERDWNRQKSRLLKGNSQ). Residues 137–149 (DKRETEKERDWNR) show a composition bias toward basic and acidic residues.

Belongs to the SmpB family.

Its subcellular location is the cytoplasm. Its function is as follows. Required for rescue of stalled ribosomes mediated by trans-translation. Binds to transfer-messenger RNA (tmRNA), required for stable association of tmRNA with ribosomes. tmRNA and SmpB together mimic tRNA shape, replacing the anticodon stem-loop with SmpB. tmRNA is encoded by the ssrA gene; the 2 termini fold to resemble tRNA(Ala) and it encodes a 'tag peptide', a short internal open reading frame. During trans-translation Ala-aminoacylated tmRNA acts like a tRNA, entering the A-site of stalled ribosomes, displacing the stalled mRNA. The ribosome then switches to translate the ORF on the tmRNA; the nascent peptide is terminated with the 'tag peptide' encoded by the tmRNA and targeted for degradation. The ribosome is freed to recommence translation, which seems to be the essential function of trans-translation. In Agrobacterium fabrum (strain C58 / ATCC 33970) (Agrobacterium tumefaciens (strain C58)), this protein is SsrA-binding protein.